The following is a 594-amino-acid chain: Elongation factor 4 (594 aa).

The tr-type G domain occupies 2–184; it reads KNIRNFSIIA…TIVAKVPAPE (183 aa). GTP is bound by residues 14-19 and 131-134; these read DHGKST and NKID.

This sequence belongs to the TRAFAC class translation factor GTPase superfamily. Classic translation factor GTPase family. LepA subfamily.

Its subcellular location is the cell inner membrane. The enzyme catalyses GTP + H2O = GDP + phosphate + H(+). In terms of biological role, required for accurate and efficient protein synthesis under certain stress conditions. May act as a fidelity factor of the translation reaction, by catalyzing a one-codon backward translocation of tRNAs on improperly translocated ribosomes. Back-translocation proceeds from a post-translocation (POST) complex to a pre-translocation (PRE) complex, thus giving elongation factor G a second chance to translocate the tRNAs correctly. Binds to ribosomes in a GTP-dependent manner. The sequence is that of Elongation factor 4 from Francisella philomiragia subsp. philomiragia (strain ATCC 25017 / CCUG 19701 / FSC 153 / O#319-036).